We begin with the raw amino-acid sequence, 135 residues long: Prostate and breast cancer overexpressed gene 1 protein (135 aa).

Expressed in colon, prostate, small intestine, testis and spleen, with lower expression in thymus, ovary, and peripheral blood leukocytes. Up-regulated expression in prostate, breast, and bladder cancer, but not in lung and colon cancer.

It is found in the cytoplasm. Its subcellular location is the nucleus. This Homo sapiens (Human) protein is Prostate and breast cancer overexpressed gene 1 protein (PBOV1).